The following is a 282-amino-acid chain: Bifunctional protein FolD (282 aa).

Residues 164–166 (GAS), Ile189, and Ile230 each bind NADP(+).

This sequence belongs to the tetrahydrofolate dehydrogenase/cyclohydrolase family. Homodimer.

It catalyses the reaction (6R)-5,10-methylene-5,6,7,8-tetrahydrofolate + NADP(+) = (6R)-5,10-methenyltetrahydrofolate + NADPH. The catalysed reaction is (6R)-5,10-methenyltetrahydrofolate + H2O = (6R)-10-formyltetrahydrofolate + H(+). It participates in one-carbon metabolism; tetrahydrofolate interconversion. Functionally, catalyzes the oxidation of 5,10-methylenetetrahydrofolate to 5,10-methenyltetrahydrofolate and then the hydrolysis of 5,10-methenyltetrahydrofolate to 10-formyltetrahydrofolate. This Campylobacter jejuni subsp. doylei (strain ATCC BAA-1458 / RM4099 / 269.97) protein is Bifunctional protein FolD.